Reading from the N-terminus, the 244-residue chain is MSDWMPIAKEYDPLKAGSIDGTDEDPHDRAVWRAMLARYVPNKGVTGDPLLTLFVARLNLQTKEEKLKEVFSRYGDIRRLRLVRDLVTGFSKGYAFIEYKEERALMKAYRDADGLVIDQHEIFVDYELERTLRGWIPRRLGGGLGGKKESGQLRFGGRDRPFRKPINLPVVKNEPHREGKRERRERSRSRDRHWDPRPRERDHDRGREKHWQERARVWPENDWEREREFREERVKSRDKRDRSK.

Positions 51-129 (LTLFVARLNL…HEIFVDYELE (79 aa)) constitute an RRM domain. The span at 146 to 162 (GKKESGQLRFGGRDRPF) shows a compositional bias: basic and acidic residues. Positions 146–244 (GKKESGQLRF…KSRDKRDRSK (99 aa)) are disordered. Residue lysine 172 forms a Glycyl lysine isopeptide (Lys-Gly) (interchain with G-Cter in SUMO2) linkage. Basic and acidic residues-rich tracts occupy residues 173–185 (NEPH…ERRE) and 192–244 (RHWD…DRSK).

Component of the U11/U12 snRNPs that are part of the U12-type spliceosome.

It is found in the nucleus. The chain is U11/U12 small nuclear ribonucleoprotein 35 kDa protein (Snrnp35) from Mus musculus (Mouse).